Consider the following 734-residue polypeptide: Photosystem I P700 chlorophyll a apoprotein A2 (734 aa).

8 helical membrane-spanning segments follow: residues 46–69, 135–158, 175–199, 273–291, 330–353, 369–395, 417–439, and 517–535; these read IFAS…FHVA, LYTG…LHLQ, LNHH…HVAI, IAHH…GHMY, IHFQ…QHMY, AALY…IFFI, AIIS…LYVH, and FLVH…LILV. C559 and C568 together coordinate [4Fe-4S] cluster. The next 2 membrane-spanning stretches (helical) occupy residues 575–596 and 643–665; these read AFYL…YWHW and LSVW…MFLI. Residues H654, M662, and Y670 each coordinate chlorophyll a. W671 contacts phylloquinone. A helical membrane pass occupies residues 707–727; sequence LVGLAHFSVGYIFTYAAFLIA.

The protein belongs to the PsaA/PsaB family. In terms of assembly, the PsaA/B heterodimer binds the P700 chlorophyll special pair and subsequent electron acceptors. PSI consists of a core antenna complex that captures photons, and an electron transfer chain that converts photonic excitation into a charge separation. The eukaryotic PSI reaction center is composed of at least 11 subunits. P700 is a chlorophyll a/chlorophyll a' dimer, A0 is one or more chlorophyll a, A1 is one or both phylloquinones and FX is a shared 4Fe-4S iron-sulfur center. is required as a cofactor.

Its subcellular location is the plastid. The protein resides in the chloroplast thylakoid membrane. The catalysed reaction is reduced [plastocyanin] + hnu + oxidized [2Fe-2S]-[ferredoxin] = oxidized [plastocyanin] + reduced [2Fe-2S]-[ferredoxin]. PsaA and PsaB bind P700, the primary electron donor of photosystem I (PSI), as well as the electron acceptors A0, A1 and FX. PSI is a plastocyanin-ferredoxin oxidoreductase, converting photonic excitation into a charge separation, which transfers an electron from the donor P700 chlorophyll pair to the spectroscopically characterized acceptors A0, A1, FX, FA and FB in turn. Oxidized P700 is reduced on the lumenal side of the thylakoid membrane by plastocyanin. The polypeptide is Photosystem I P700 chlorophyll a apoprotein A2 (Pelargonium hortorum (Common geranium)).